The primary structure comprises 27 residues: Carcinustatin-20 (27 aa).

Leucine 27 carries the post-translational modification Leucine amide.

Belongs to the allatostatin family.

The protein localises to the secreted. In terms of biological role, may act as a neurotransmitter or neuromodulator. This Carcinus maenas (Common shore crab) protein is Carcinustatin-20.